The sequence spans 313 residues: Pyrimidine-specific ribonucleoside hydrolase RihB (313 aa).

The active-site Proton acceptor is the aspartate 11. The Ca(2+) site is built by aspartate 11, aspartate 16, and valine 124. Substrate is bound by residues glutamine 227 and histidine 239. Aspartate 240 serves as a coordination point for Ca(2+).

It belongs to the IUNH family. RihB subfamily. In terms of assembly, homotetramer. Ca(2+) serves as cofactor.

The enzyme catalyses a pyrimidine ribonucleoside + H2O = a pyrimidine nucleobase + D-ribose. Functionally, hydrolyzes cytidine or uridine to ribose and cytosine or uracil, respectively. Has a clear preference for cytidine over uridine. Strictly specific for ribonucleosides. This is Pyrimidine-specific ribonucleoside hydrolase RihB from Escherichia coli (strain SE11).